Here is a 68-residue protein sequence, read N- to C-terminus: Movement protein TGBp3 (68 aa).

Residues methionine 1 to glutamate 6 are Lumenal-facing. A helical membrane pass occupies residues isoleucine 7–alanine 26. At threonine 27–asparagine 68 the chain is on the cytoplasmic side.

The protein belongs to the Tymovirales TGBp3 protein family.

It localises to the host endoplasmic reticulum membrane. Functionally, plays a role in viral cell-to-cell propagation, by facilitating genome transport to neighboring plant cells through plasmosdesmata. May induce the formation of granular vesicles derived from the Endoplasmic reticulum, which align on actin filaments. This is Movement protein TGBp3 from Papaya mosaic potexvirus (PMV).